The sequence spans 748 residues: Catalase-peroxidase (748 aa).

Residues 96–229 constitute a cross-link (tryptophyl-tyrosyl-methioninium (Trp-Tyr) (with M-255)); sequence WHSAGTYRVA…LAAAHMGLIY (134 aa). H97 serves as the catalytic Proton acceptor. The tryptophyl-tyrosyl-methioninium (Tyr-Met) (with W-96) cross-link spans 229-255; it reads YVNPEGPDGNPDPIAAAKDIRTTFGRM. H270 provides a ligand contact to heme b.

The protein belongs to the peroxidase family. Peroxidase/catalase subfamily. Homodimer or homotetramer. It depends on heme b as a cofactor. Post-translationally, formation of the three residue Trp-Tyr-Met cross-link is important for the catalase, but not the peroxidase activity of the enzyme.

It is found in the cytoplasm. It carries out the reaction H2O2 + AH2 = A + 2 H2O. The enzyme catalyses 2 H2O2 = O2 + 2 H2O. Bifunctional enzyme with both catalase and broad-spectrum peroxidase activity. Plays a crucial role in oxidative stress response during infection. Acts as an antigen and elicits antibody response in P.marneffei-infected AIDS patients, healthy people working in mycological laboratory, and healthy people in an endemic area. The protein is Catalase-peroxidase of Talaromyces marneffei (Penicillium marneffei).